The sequence spans 311 residues: MAEIYLAGGCFWGLEEYFSRIEGVKKTTVGYANGQVESTNYQLIHQTDHAETVHLIYDEKRVSLREILLYYFRVIDPLSVNKQGNDVGRQYRTGVYYTNQADKAVIEQVFAEQEKQLGQKIAVELEPLRHYVLAEDYHQDYLKKNPGGYCHINVNDAYQPLVDPGQYEKPTDAELKEQLTQEQYQVTQLSATERPFHNAYNATFEEGIYVDVTTGEPLFFAGDKFESGCGWPSFSRPIAREVLRYYEDKSHGMERIEVRSRSGNAHLGHVFTDGPESAGGLRYCINSAALRFIPKEKMEAEGYAYLLQHMK.

A peptide methionine sulfoxide reductase A region spans residues 1–155; it reads MAEIYLAGGC…PGGYCHINVN (155 aa). C10 is an active-site residue. Residues 172–295 enclose the MsrB domain; sequence DAELKEQLTQ…NSAALRFIPK (124 aa). The Nucleophile role is filled by C284.

In the N-terminal section; belongs to the MsrA Met sulfoxide reductase family. The protein in the C-terminal section; belongs to the MsrB Met sulfoxide reductase family.

The enzyme catalyses L-methionyl-[protein] + [thioredoxin]-disulfide + H2O = L-methionyl-(S)-S-oxide-[protein] + [thioredoxin]-dithiol. It catalyses the reaction [thioredoxin]-disulfide + L-methionine + H2O = L-methionine (S)-S-oxide + [thioredoxin]-dithiol. It carries out the reaction L-methionyl-[protein] + [thioredoxin]-disulfide + H2O = L-methionyl-(R)-S-oxide-[protein] + [thioredoxin]-dithiol. Its function is as follows. Has an important function as a repair enzyme for proteins that have been inactivated by oxidation. Catalyzes the reversible oxidation-reduction of methionine sulfoxide in proteins to methionine. Involved in protection against oxidative stress when the bacterium enters the host bloodstream and required for maximal growth under aerobic and anaerobic conditions. This chain is Peptide methionine sulfoxide reductase MsrA/MsrB (msrAB), found in Streptococcus gordonii (strain Challis / ATCC 35105 / BCRC 15272 / CH1 / DL1 / V288).